We begin with the raw amino-acid sequence, 428 residues long: 3-phosphoshikimate 1-carboxyvinyltransferase (428 aa).

The 3-phosphoshikimate site is built by Lys-22, Ser-23, and Arg-27. A phosphoenolpyruvate-binding site is contributed by Lys-22. Phosphoenolpyruvate contacts are provided by Gly-96 and Arg-124. 3-phosphoshikimate-binding residues include Ser-170, Ser-171, Gln-172, Ser-198, Asp-314, Asn-337, and Lys-341. A phosphoenolpyruvate-binding site is contributed by Gln-172. Catalysis depends on Asp-314, which acts as the Proton acceptor. Phosphoenolpyruvate-binding residues include Arg-345, Arg-387, and Lys-412.

This sequence belongs to the EPSP synthase family. Monomer.

The protein resides in the cytoplasm. It catalyses the reaction 3-phosphoshikimate + phosphoenolpyruvate = 5-O-(1-carboxyvinyl)-3-phosphoshikimate + phosphate. It participates in metabolic intermediate biosynthesis; chorismate biosynthesis; chorismate from D-erythrose 4-phosphate and phosphoenolpyruvate: step 6/7. In terms of biological role, catalyzes the transfer of the enolpyruvyl moiety of phosphoenolpyruvate (PEP) to the 5-hydroxyl of shikimate-3-phosphate (S3P) to produce enolpyruvyl shikimate-3-phosphate and inorganic phosphate. In Shewanella denitrificans (strain OS217 / ATCC BAA-1090 / DSM 15013), this protein is 3-phosphoshikimate 1-carboxyvinyltransferase.